Consider the following 478-residue polypeptide: D(1B) dopamine receptor (478 aa).

Over 1 to 38 (MLPPGRNGTAHRARLGLQRQLAQVDAPGGSAAPLGPAQ) the chain is Extracellular. Residue asparagine 7 is glycosylated (N-linked (GlcNAc...) asparagine). The helical transmembrane segment at 39-64 (VVTAGLLTLLIVWTLLGNVLVCAAIV) threads the bilayer. The Cytoplasmic segment spans residues 65 to 75 (RSRHLRAKMTN). Residues 76-102 (IFIVSLAVSDLFVALLVMPWKAVAEVA) traverse the membrane as a helical segment. Residues 103-111 (GYWPFGAFC) are Extracellular-facing. A disulfide bridge connects residues cysteine 111 and cysteine 211. Residues 112 to 134 (DIWVAFDIMCSTASILNLCIISV) form a helical membrane-spanning segment. Residues 135–153 (DRYWAISRPFRYERKMTQR) are Cytoplasmic-facing. Residues 154–179 (VALVMVALAWTLSILISFIPVQLNWH) traverse the membrane as a helical segment. Topologically, residues 180 to 215 (RDKAGSQGREGLLSNETPWEEGWELDGRTENCDSSL) are extracellular. A helical transmembrane segment spans residues 216 to 240 (NRTYAISSSLISFYIPVAIMIVTYT). Residues 241-289 (RIYRIAQVQIRRISSLERAAEHAQSCRSRGACEPDPSLRASIKKETKVF) lie on the Cytoplasmic side of the membrane. The chain crosses the membrane as a helical span at residues 290–317 (KTLSVIMGVFVCCWLPFFILNCMVPFCS). At 318–335 (SGDAQGPRTGFPCVSETT) the chain is on the extracellular side. A helical transmembrane segment spans residues 336–357 (FDIFVWFGWANSSLNPIIYAFN). Residues 358-478 (ADFRKVFAQL…LTPNCFHKTA (121 aa)) are Cytoplasmic-facing. The S-palmitoyl cysteine moiety is linked to residue cysteine 370. Positions 416 to 446 (GDREVGEEEEAEEEGPFDHMSQISPTTPDGD) are disordered. Acidic residues predominate over residues 420–430 (VGEEEEAEEEG).

It belongs to the G-protein coupled receptor 1 family.

It is found in the cell membrane. Dopamine receptor whose activity is mediated by G proteins which activate adenylyl cyclase. This Mus musculus (Mouse) protein is D(1B) dopamine receptor (Drd5).